The following is an 851-amino-acid chain: DEAD-box ATP-dependent RNA helicase 29 (851 aa).

Positions 1 to 49 are disordered; that stretch reads MARLNPSKPSSRGGKPRSSSADAMAEHKPPPGRPKREGEGASKKKAKSG. Over residues 7–20 the composition is skewed to low complexity; it reads SKPSSRGGKPRSSS. A compositionally biased stretch (basic and acidic residues) spans 24-42; it reads MAEHKPPPGRPKREGEGAS. The Q motif signature appears at 49 to 77; sequence GGFESMGLCEEVYRGVRHKGYRVPTPIQR. The Helicase ATP-binding domain maps to 80–253; that stretch reads MPLILAGHDI…KAGLRDPQIV (174 aa). ATP is bound at residue 93 to 100; the sequence is ARTGSGKT. Residues 201-204 carry the DEAD box motif; that stretch reads DEAD. One can recognise a Helicase C-terminal domain in the interval 277–426; the sequence is KLAALLYLVR…PAPTEEELLK (150 aa). The segment at 702–851 is disordered; sequence KWQQKTHRSI…KGKMKGKGTR (150 aa). Positions 733-746 are enriched in basic residues; the sequence is RGNRKHTAAGRGRR. Composition is skewed to basic and acidic residues over residues 773 to 787 and 796 to 825; these read DIAR…ESKF and RHDG…DGNG. A compositionally biased stretch (basic residues) spans 841–851; it reads GKGKMKGKGTR.

This sequence belongs to the DEAD box helicase family. DDX54/DBP10 subfamily.

It catalyses the reaction ATP + H2O = ADP + phosphate + H(+). The polypeptide is DEAD-box ATP-dependent RNA helicase 29 (Oryza sativa subsp. indica (Rice)).